The sequence spans 436 residues: GDP-mannose 6-dehydrogenase (436 aa).

Residues tyrosine 10, valine 11, aspartate 30, lysine 35, threonine 86, and threonine 124 each contribute to the NAD(+) site. GDP-alpha-D-mannuronate-binding residues include glutamate 161, lysine 210, asparagine 214, histidine 217, asparagine 225, tyrosine 256, tyrosine 257, arginine 259, phenylalanine 262, and glycine 265. Cysteine 268 functions as the Nucleophile in the catalytic mechanism. Lysine 271 contacts NAD(+). Residues 278 to 295 (YRASQLDVEHPMLGSLMR) form an inter-domain linker region. Lysine 324 serves as a coordination point for GDP-alpha-D-mannuronate. An NAD(+)-binding site is contributed by arginine 331.

This sequence belongs to the UDP-glucose/GDP-mannose dehydrogenase family. Forms a domain-swapped dimer with each peptide contributing to each active site. The dimers assemble further. X-ray structures indicate this enzyme exists as a homotetramer PubMed:12705829, but kinetic and physical results obtained in PubMed:2470755 and PubMed:12135385 indicate that it is probably a homohexamer.

It carries out the reaction GDP-alpha-D-mannose + 2 NAD(+) + H2O = GDP-alpha-D-mannuronate + 2 NADH + 3 H(+). It participates in glycan biosynthesis; alginate biosynthesis. Its activity is regulated as follows. Inhibited by GMP, ATP, GDP-D-glucose and maltose. Inhibited by GMP and deamidoNAD. Its function is as follows. Catalyzes the oxidation of guanosine diphospho-D-mannose (GDP-D-mannose) to GDP-D-mannuronic acid, a precursor for alginate polymerization. The alginate layer causes a mucoid phenotype and provides a protective barrier against host immune defenses and antibiotics. Other sugars are not used as substrates. The polypeptide is GDP-mannose 6-dehydrogenase (Pseudomonas aeruginosa (strain ATCC 15692 / DSM 22644 / CIP 104116 / JCM 14847 / LMG 12228 / 1C / PRS 101 / PAO1)).